An 82-amino-acid chain; its full sequence is Small ribosomal subunit protein uS17 (82 aa).

The protein belongs to the universal ribosomal protein uS17 family. In terms of assembly, part of the 30S ribosomal subunit.

Functionally, one of the primary rRNA binding proteins, it binds specifically to the 5'-end of 16S ribosomal RNA. The protein is Small ribosomal subunit protein uS17 of Synechococcus elongatus (strain ATCC 33912 / PCC 7942 / FACHB-805) (Anacystis nidulans R2).